The chain runs to 115 residues: Probable non-functional immunoglobulin heavy variable 8-51-1 (115 aa).

The N-terminal stretch at 1-17 (MLVCVLLYSFRLFGIQG) is a signal peptide. Residues 18–42 (EAQLTESGGDLVHLEGPLRLSCAAS) are framework-1. One can recognise an Ig-like domain in the interval 19–115 (AQLTESGGDL…QNMAAFNCAG (97 aa)). Positions 43-50 (WFTFSIYE) are complementarity-determining-1. The tract at residues 51-67 (IHWVCQASGKGLEWVAV) is framework-2. Cys-55 and Cys-113 are disulfide-bonded. A complementarity-determining-2 region spans residues 68–75 (IWRGESHQ). The tract at residues 76 to 113 (YNADYVRGRLTTSRDNTKYMLYMQMISLRTQNMAAFNC) is framework-3. The interval 114-115 (AG) is complementarity-determining-3.

Immunoglobulins are composed of two identical heavy chains and two identical light chains; disulfide-linked.

Its subcellular location is the secreted. It localises to the cell membrane. Probable non-functional open reading frame (ORF) of V region of the variable domain of immunoglobulin heavy chains. Non-functional ORF generally cannot participate in the synthesis of a productive immunoglobulin chain due to altered V-(D)-J or switch recombination and/or splicing site (at mRNA level) and/or conserved amino acid change (protein level). Immunoglobulins, also known as antibodies, are membrane-bound or secreted glycoproteins produced by B lymphocytes. In the recognition phase of humoral immunity, the membrane-bound immunoglobulins serve as receptors which, upon binding of a specific antigen, trigger the clonal expansion and differentiation of B lymphocytes into immunoglobulins-secreting plasma cells. Secreted immunoglobulins mediate the effector phase of humoral immunity, which results in the elimination of bound antigens. The antigen binding site is formed by the variable domain of one heavy chain, together with that of its associated light chain. Thus, each immunoglobulin has two antigen binding sites with remarkable affinity for a particular antigen. The variable domains are assembled by a process called V-(D)-J rearrangement and can then be subjected to somatic hypermutations which, after exposure to antigen and selection, allow affinity maturation for a particular antigen. This is Probable non-functional immunoglobulin heavy variable 8-51-1 from Homo sapiens (Human).